Consider the following 358-residue polypeptide: BAG family molecular chaperone regulator 1 (358 aa).

3 stretches are compositionally biased toward basic and acidic residues: residues 1-14 (MADR…RGDQ), 26-39 (SARE…RAER), and 85-94 (KVAHSKELTR). Residues 1 to 113 (MADRGGARRP…VTGTQEATQV (113 aa)) are disordered. 7 tandem repeats follow at residues 102–111 (KKVTGTQEAT), 114–119 (EEVTTI), 120–125 (EEATQT), 126–131 (EEITVA), 132–137 (EEVTQT), 144–149 (EEMVQT), and 150–155 (EEMEPP). The interval 114–212 (EEVTTIEEAT…LIFKGKSLKE (99 aa)) is 7 X 6 AA tandem repeat of E-E-X(4). Positions 157-237 (LSVVVTHSNE…VMLIGEKSNP (81 aa)) constitute a Ubiquitin-like domain. The interval 185 to 232 (DLAQLVEEATGVPLPFQKLIFKGKSLKEMETPLSALGMQNGCRVMLIG) is interaction with HSPA8. The interval 229–358 (MLIGEKSNPE…LQSTNLALPE (130 aa)) is interaction with PPP1R15A. Positions 259 to 339 (HLEELNKELS…VFLAECDTVE (81 aa)) constitute a BAG domain.

As to quaternary structure, homodimer. Forms a heteromeric complex with HSP70/HSC70. Binds to the ATPase domain of HSP/HSC70 chaperones. Interacts with NR3C1. Interacts with the N-terminal region of MAPRE2. Interacts with PPP1R15A. Interacts with BCL2 in an ATP-dependent manner. Interacts with SIAH1, SIAH2, HSPA8 (via NBD), HSPA1A (via NBD) and HSPA1B (via NBD). Interacts with ESR1; the interaction is promoted in the absence of estradiol (17-beta-estradiol/E2). Post-translationally, ubiquitinated; mediated by SIAH1 or SIAH2 and leading to its subsequent proteasomal degradation. As to expression, expressed in the CA1 region of the hippocampus (at protein level). Expressed in the uterus (at protein level).

It localises to the nucleus. The protein localises to the cytoplasm. Functionally, co-chaperone for HSP70 and HSC70 chaperone proteins. Acts as a nucleotide-exchange factor (NEF) promoting the release of ADP from the HSP70 and HSC70 proteins thereby triggering client/substrate protein release. Nucleotide release is mediated via its binding to the nucleotide-binding domain (NBD) of HSPA8/HSC70 where as the substrate release is mediated via its binding to the substrate-binding domain (SBD) of HSPA8/HSC70. Inhibits the pro-apoptotic function of PPP1R15A, and has anti-apoptotic activity. Markedly increases the anti-cell death function of BCL2 induced by various stimuli. Involved in the STUB1-mediated proteasomal degradation of ESR1 in response to age-related circulating estradiol (17-beta-estradiol/E2) decline, thereby promotes neuronal apoptosis in response to ischemic reperfusion injury. The polypeptide is BAG family molecular chaperone regulator 1 (Bag1) (Rattus norvegicus (Rat)).